Consider the following 208-residue polypeptide: ATP-dependent Clp protease proteolytic subunit (208 aa).

Ser107 (nucleophile) is an active-site residue. His132 is a catalytic residue.

It belongs to the peptidase S14 family. Fourteen ClpP subunits assemble into 2 heptameric rings which stack back to back to give a disk-like structure with a central cavity, resembling the structure of eukaryotic proteasomes.

Its subcellular location is the cytoplasm. The catalysed reaction is Hydrolysis of proteins to small peptides in the presence of ATP and magnesium. alpha-casein is the usual test substrate. In the absence of ATP, only oligopeptides shorter than five residues are hydrolyzed (such as succinyl-Leu-Tyr-|-NHMec, and Leu-Tyr-Leu-|-Tyr-Trp, in which cleavage of the -Tyr-|-Leu- and -Tyr-|-Trp bonds also occurs).. Functionally, cleaves peptides in various proteins in a process that requires ATP hydrolysis. Has a chymotrypsin-like activity. Plays a major role in the degradation of misfolded proteins. This chain is ATP-dependent Clp protease proteolytic subunit, found in Methylobacterium radiotolerans (strain ATCC 27329 / DSM 1819 / JCM 2831 / NBRC 15690 / NCIMB 10815 / 0-1).